The chain runs to 235 residues: Small capsomere-interacting protein (235 aa).

Positions 104 to 235 (PRIIRPQPPN…SGNASRSRRV (132 aa)) are disordered. Residues 127 to 139 (PQKTQSADQSALQ) are compositionally biased toward polar residues. The span at 158-188 (TTSASVGQQQHVVSGSSGQQPQQGAQSSTVQ) shows a compositional bias: low complexity. Residues 220 to 235 (LSHTGQSGNASRSRRV) are compositionally biased toward polar residues.

It belongs to the herpesviridae small capsomere-interacting protein family. As to quaternary structure, interacts with the major capsid protein/MCP.

The protein localises to the virion. It localises to the host nucleus. Functionally, participates in the assembly of the infectious particles by decorating the outer surface of the capsid shell and thus forming a layer between the capsid and the tegument. Complexes composed of the capsid protein VP5 and VP26 assemble together in the host cytoplasm and are translocated to the nucleus, where they accumulate and participate in capsid assembly. In terms of biological role, participates in the assembly of the infectious particles by decorating the outer surface of the capsid shell and thus forming a layer between the capsid and the tegument. Complexes composed of the major capsid protein and small capsomere-interacting protein/SCP assemble together in the host cytoplasm and are translocated to the nucleus, where they accumulate and participate in capsid assembly. This Homo sapiens (Human) protein is Small capsomere-interacting protein.